The sequence spans 142 residues: Nitrogen fixation protein NifU 2 (142 aa).

The interval 1–36 (MKDLFDESLTLDTGSAAPGTAPGRPRRRQPAGGKAP) is disordered. The span at 14–23 (GSAAPGTAPG) shows a compositional bias: low complexity.

It belongs to the NifU family.

Functionally, may be involved in the formation or repair of [Fe-S] clusters present in iron-sulfur proteins. The polypeptide is Nitrogen fixation protein NifU 2 (nifU2) (Rhodobacter capsulatus (Rhodopseudomonas capsulata)).